The chain runs to 70 residues: Large ribosomal subunit protein bL31 (70 aa).

This sequence belongs to the bacterial ribosomal protein bL31 family. Type A subfamily. As to quaternary structure, part of the 50S ribosomal subunit.

Its function is as follows. Binds the 23S rRNA. This is Large ribosomal subunit protein bL31 from Chlorobium chlorochromatii (strain CaD3).